A 677-amino-acid chain; its full sequence is MPGFLVRILPLLLALLLLGPTRGLRNATQRMFEIDYSRDCFLKDGQPFRYISGSIHYSRVPRFYWKDRLLKMKMAGLNAIQTYVPWNFHEPWPGQYQFSEDHDVEYFLQLAHELGLLVILRPGPYICAEWEMGGLPAWLLEKESILLRSSDPDYLAAVDKWLGVLLPKMKPLLYQNGGPVITVQVENEYGSYFACDFDYLRFLQKCFRHHLGDDVVLFTTDGAHKTFLKCGALQGLYTTVDFGTGSNITDAFLSQRKCEPKGPLINSEFYTGWLDHWGQPHSTIKTEAVASSLYDILARGASVNLYMFIGGTNFAYWNGANTPYAAQPTSYDYDAPLSEAGDLTEKYFALRNIIQKFEKVPEGPIPPSTPKFAYGKVALEKLKTVGAALDILCPSGPIKSLYPLTFIQVKQHYGFVLYRTTLPQDCSNPAPLSSPFNGVHDRAYVAVDGIPQGVLERNNVITLNITGKAGATLDLLVENMGRVNYGAYINDFKGLVSNLTLSSNILTDWTIFPLDTEDAVRSHLGGWGHRDSGHHDEAWAHSSSNYTLPAFYVGNFSIPSGIPDLPQDTFIQFPGWTKGQVWINGFNLGRYWPARGPQLTLFVPQHILMTSAPNTITMLELERAPCSNDDPELCAVTFVDRPVIGSSVTYDHPSKPVEKKLMPSPPQKNKDSWLDHV.

The first 23 residues, 1–23, serve as a signal peptide directing secretion; it reads MPGFLVRILPLLLALLLLGPTRG. A propeptide spanning residues 24-28 is cleaved from the precursor; the sequence is LRNAT. Asparagine 26 carries N-linked (GlcNAc...) asparagine glycosylation. Substrate contacts are provided by tyrosine 83, glutamate 129, and asparagine 187. Glutamate 188 functions as the Proton donor in the catalytic mechanism. Cysteine 195 and cysteine 230 form a disulfide bridge. N-linked (GlcNAc...) asparagine glycosylation is present at asparagine 247. Glutamate 268 (nucleophile) is an active-site residue. Residue tyrosine 333 participates in substrate binding. Asparagine 464, asparagine 498, asparagine 545, and asparagine 555 each carry an N-linked (GlcNAc...) asparagine glycan. A disulfide bond links cysteine 626 and cysteine 634. A disordered region spans residues 654–677; it reads SKPVEKKLMPSPPQKNKDSWLDHV. The span at 668–677 shows a compositional bias: basic and acidic residues; the sequence is KNKDSWLDHV.

Belongs to the glycosyl hydrolase 35 family. As to quaternary structure, homodimer. May form higher multimers.

The protein resides in the lysosome. It carries out the reaction Hydrolysis of terminal non-reducing beta-D-galactose residues in beta-D-galactosides.. Functionally, cleaves beta-linked terminal galactosyl residues from gangliosides, glycoproteins, and glycosaminoglycans. This is Beta-galactosidase (GLB1) from Pongo abelii (Sumatran orangutan).